A 316-amino-acid chain; its full sequence is Pantothenate kinase (316 aa).

An ATP-binding site is contributed by 95–102; that stretch reads GSVAVGKS.

It belongs to the prokaryotic pantothenate kinase family.

Its subcellular location is the cytoplasm. It catalyses the reaction (R)-pantothenate + ATP = (R)-4'-phosphopantothenate + ADP + H(+). Its pathway is cofactor biosynthesis; coenzyme A biosynthesis; CoA from (R)-pantothenate: step 1/5. The protein is Pantothenate kinase of Shewanella oneidensis (strain ATCC 700550 / JCM 31522 / CIP 106686 / LMG 19005 / NCIMB 14063 / MR-1).